The chain runs to 529 residues: N5-hydroxyornithine acetylase sidL (529 aa).

Disordered stretches follow at residues 59–95 (ASVN…VRPF) and 239–258 (SPWP…SPVA). His-462 provides a ligand contact to substrate. Glu-498 functions as the Proton acceptor in the catalytic mechanism.

It belongs to the lysine N-acyltransferase mbtK family.

The protein resides in the cytoplasm. It is found in the cytosol. It functions in the pathway siderophore biosynthesis. Its function is as follows. Acyltransferase; part of the gene cluster that mediates the biosynthesis of at least 11 siderophores, including beauverichelin A, dimerumic acid (DA), Na-dimethyl coprogen (NADC), eleutherazine B, ferricrocin (FC), fusarinine A, fusarinine C (FsC), metachelin A, mevalonolactone, rhodotorulic acid (RA) and tenellin. This cocktail of siderophores for iron metabolism is essential for virulence, and more specifically for the fungal virulence in penetrating through the host cuticle. Siderophore synthesis is also involved in conidial germination under iron-deficient conditions. SIDL contributes to partial production of ferricrocin under iron-limiting conditions via the acetylation of N(5)-hydroxyornithine. The protein is N5-hydroxyornithine acetylase sidL of Beauveria bassiana (strain ARSEF 2860) (White muscardine disease fungus).